Consider the following 227-residue polypeptide: Ribonuclease 3 (227 aa).

The region spanning 3–130 (TNAISKIIKY…LIGAIYLDGG (128 aa)) is the RNase III domain. Glu-43 serves as a coordination point for Mg(2+). Asp-47 is an active-site residue. Mg(2+)-binding residues include Asn-116 and Glu-119. The active site involves Glu-119. A DRBM domain is found at 155–224 (DAKTILQEWA…ASLMLAKINY (70 aa)).

Belongs to the ribonuclease III family. In terms of assembly, homodimer. Mg(2+) serves as cofactor.

It is found in the cytoplasm. The enzyme catalyses Endonucleolytic cleavage to 5'-phosphomonoester.. Functionally, digests double-stranded RNA. Involved in the processing of primary rRNA transcript to yield the immediate precursors to the large and small rRNAs (23S and 16S). Processes some mRNAs, and tRNAs when they are encoded in the rRNA operon. Processes pre-crRNA and tracrRNA of type II CRISPR loci if present in the organism. The polypeptide is Ribonuclease 3 (Ehrlichia ruminantium (strain Gardel)).